Reading from the N-terminus, the 366-residue chain is Agamous-like MADS-box protein AGL36 (366 aa).

The region spanning 1–59 (MKKVKLSLIANERSRKTSFIKRKDGIFKKLHELSTLCGVQACALIYSPFIPVPESWPSR) is the MADS-box domain. A coiled-coil region spans residues 86-115 (TYLMERITKAKEQLKNLAAENRELQVRRFM).

In terms of assembly, interacts with AGL62.

The protein resides in the nucleus. Its function is as follows. Probable transcription factor. The polypeptide is Agamous-like MADS-box protein AGL36 (AGL36) (Arabidopsis thaliana (Mouse-ear cress)).